The chain runs to 308 residues: Ribose 1,5-bisphosphate isomerase (308 aa).

Residues 24–27 (RGAG) and Arg-67 contribute to the substrate site. The active-site Proton acceptor is the Cys-129. Catalysis depends on Asp-198, which acts as the Proton donor. Substrate contacts are provided by residues 208–209 (NK) and Lys-234.

Belongs to the eIF-2B alpha/beta/delta subunits family. R15P isomerase subfamily.

It carries out the reaction alpha-D-ribose 1,5-bisphosphate = D-ribulose 1,5-bisphosphate. Catalyzes the isomerization of ribose 1,5-bisphosphate (R15P) to ribulose 1,5-bisphosphate (RuBP), the CO(2) acceptor and substrate for RubisCO. Functions in an archaeal AMP degradation pathway, together with AMP phosphorylase and RubisCO. This chain is Ribose 1,5-bisphosphate isomerase, found in Methanocaldococcus jannaschii (strain ATCC 43067 / DSM 2661 / JAL-1 / JCM 10045 / NBRC 100440) (Methanococcus jannaschii).